A 469-amino-acid chain; its full sequence is Putative arginine/ornithine antiporter (469 aa).

12 helical membrane-spanning segments follow: residues 8 to 28 (GFWL…IFSL), 44 to 64 (AWLL…HLSI), 90 to 110 (AGFT…VAII), 144 to 164 (LTFA…VASI), 179 to 199 (VLGF…SLFG), 213 to 233 (IGIG…FVGI), 254 to 274 (ITGL…TMGV), 301 to 321 (VIMA…WILL), 347 to 367 (SPVI…FSVI), 375 to 395 (FTFL…VSAI), 417 to 437 (DGLI…TGTA), and 439 to 459 (LTTF…YPFV).

The protein belongs to the amino acid-polyamine-organocation (APC) superfamily. Basic amino acid/polyamine antiporter (APA) (TC 2.A.3.2) family.

The protein resides in the cell membrane. The catalysed reaction is L-ornithine(in) + L-arginine(out) = L-ornithine(out) + L-arginine(in). Catalyzes electroneutral exchange between L-arginine and L-ornithine. The chain is Putative arginine/ornithine antiporter (yvsH) from Bacillus subtilis (strain 168).